The following is a 387-amino-acid chain: Testis-expressed protein 9 (387 aa).

Disordered stretches follow at residues 1-25 and 58-133; these read MAGRSVRVPRRGSAGTQSRGQLAAG and REQQ…LKYP. Composition is skewed to polar residues over residues 70-91 and 103-115; these read ALTTSCKEEGGSSSRDLLSSEG and KNTGPVNKIQNRL. Positions 184-347 form a coiled coil; that stretch reads IGTEAQIRFL…ERQKGELMIG (164 aa).

Testis-specific.

It is found in the cytoplasm. Its subcellular location is the cytoskeleton. The protein localises to the microtubule organizing center. It localises to the centrosome. The protein resides in the centriolar satellite. This chain is Testis-expressed protein 9 (Tex9), found in Mus musculus (Mouse).